The primary structure comprises 433 residues: Mannan endo-1,4-beta-mannosidase 2 (433 aa).

The signal sequence occupies residues 1–28; that stretch reads MAAPTGNGPVIPILGFLTCVAFIYLSFG. Residue N46 is glycosylated (N-linked (GlcNAc...) asparagine). W98 is a substrate binding site. N-linked (GlcNAc...) asparagine glycosylation is present at N169. A substrate-binding site is contributed by N214. The Proton donor role is filled by E215. Y295 is a binding site for substrate. E335 acts as the Nucleophile in catalysis. Position 377 (W377) interacts with substrate.

The protein belongs to the glycosyl hydrolase 5 (cellulase A) family. As to expression, expressed in roots, stems, leaves and seeds.

Its subcellular location is the secreted. It catalyses the reaction Random hydrolysis of (1-&gt;4)-beta-D-mannosidic linkages in mannans, galactomannans and glucomannans.. This chain is Mannan endo-1,4-beta-mannosidase 2 (MAN2), found in Arabidopsis thaliana (Mouse-ear cress).